The primary structure comprises 257 residues: Diphthine synthase (257 aa).

Residues L9, D85, V88, 113–114, L164, A207, and H232 contribute to the S-adenosyl-L-methionine site; that span reads SI.

It belongs to the diphthine synthase family. Homodimer.

The enzyme catalyses 2-[(3S)-amino-3-carboxypropyl]-L-histidyl-[translation elongation factor 2] + 3 S-adenosyl-L-methionine = diphthine-[translation elongation factor 2] + 3 S-adenosyl-L-homocysteine + 3 H(+). Its pathway is protein modification; peptidyl-diphthamide biosynthesis. Functionally, S-adenosyl-L-methionine-dependent methyltransferase that catalyzes the trimethylation of the amino group of the modified target histidine residue in translation elongation factor 2 (EF-2), to form an intermediate called diphthine. The three successive methylation reactions represent the second step of diphthamide biosynthesis. This is Diphthine synthase from Methanococcus aeolicus (strain ATCC BAA-1280 / DSM 17508 / OCM 812 / Nankai-3).